A 95-amino-acid chain; its full sequence is uncharacterized protein (95 aa).

The protein belongs to the asfivirus DP96R family.

This is an uncharacterized protein from African swine fever virus (isolate Warthog/Namibia/Wart80/1980) (ASFV).